The sequence spans 688 residues: MSAQASVAEVKRDKPWIIRTYAGHSTAAESNKLYRGNLAKGQTGLSVAFDLPTQTGYDPDHELARGEVGKVGVSIAHLGDMRALFDQIPLAQMNTSMTINATAPWLLSLYLAVAEEQGAPLAALQGTTQNDIIKEYLSRGTYVFPPAPSLRLTKDVILFTTKNVPKWNPMNVCSYHLQEAGATPVQELSYALAIAIAVLDTVRDDPDFDEASFSDVFSRISFFVNAGMRFVTEICKMRAFAELWDEIAQERYGITDAKKRIFRYGVQVNSLGLTEQQPENNVHRILIEMLAVTLSKRARARAVQLPAWNEALGLPRPWDQQWSMRMQQILAFETDLLEYDDIFDGSTVIEARVEALKEQTRAELTRIAEIGGAVTAVEAGELKRALVESNARRISAIEKGEQIVVGVNKWQQGEPSPLTAGDGAIFTVSETVEMEAETRIREWRSKRDERAVGQALADLEQAARSGANIMPPSIAAAKAGVTTGEWGQRLREVFGEYRAPTGVTLQTVTSGAAEDARLLIADLGERLGETPRLVVGKPGLDGHSNGAEQIALRARDVGFDVTYDGIRQTPTEIVAKAKERGAHVIGLSVLSGSHVPLVREVKAKLREAGLDHVPVVVGGIISTEDELVLKNMGVTAVYTPKDYELDKIMVGLAKVVERALDKRAADRADTEAGVPGAPKRNESGAQVF.

The B12-binding domain maps to 530–659; that stretch reads TPRLVVGKPG…VGLAKVVERA (130 aa). Position 543 (His543) interacts with adenosylcob(III)alamin. The segment at 666–688 is disordered; that stretch reads DRADTEAGVPGAPKRNESGAQVF.

It belongs to the methylmalonyl-CoA mutase family. It depends on adenosylcob(III)alamin as a cofactor.

It carries out the reaction (2R)-ethylmalonyl-CoA = (2S)-methylsuccinyl-CoA. Its function is as follows. Radical enzyme that catalyzes the transformation of (2R)-ethylmalonyl-CoA to (2S)-methylsuccinyl-CoA. Is involved in the ethylmalonyl-CoA pathway for acetyl-CoA assimilation required for M.extorquens growth on one- and two-carbon compounds such as ethylamine, methanol or ethanol as sole carbon source. This enzyme acts as a regulatory metabolic control point in this pathway, that allows M.extorquens to efficiently restore metabolic balance when challenged with a sudden change in the growth substrate. The polypeptide is Ethylmalonyl-CoA mutase (Methylorubrum extorquens (strain ATCC 14718 / DSM 1338 / JCM 2805 / NCIMB 9133 / AM1) (Methylobacterium extorquens)).